The primary structure comprises 263 residues: Ribosomal RNA small subunit methyltransferase A (263 aa).

S-adenosyl-L-methionine contacts are provided by N20, L22, G47, E68, D90, and N110.

This sequence belongs to the class I-like SAM-binding methyltransferase superfamily. rRNA adenine N(6)-methyltransferase family. RsmA subfamily.

It localises to the cytoplasm. The enzyme catalyses adenosine(1518)/adenosine(1519) in 16S rRNA + 4 S-adenosyl-L-methionine = N(6)-dimethyladenosine(1518)/N(6)-dimethyladenosine(1519) in 16S rRNA + 4 S-adenosyl-L-homocysteine + 4 H(+). In terms of biological role, specifically dimethylates two adjacent adenosines (A1518 and A1519) in the loop of a conserved hairpin near the 3'-end of 16S rRNA in the 30S particle. May play a critical role in biogenesis of 30S subunits. In Chlorobium limicola (strain DSM 245 / NBRC 103803 / 6330), this protein is Ribosomal RNA small subunit methyltransferase A.